A 1900-amino-acid chain; its full sequence is Phosphatidylinositol 4-kinase STT4 (1900 aa).

Phosphoserine is present on Ser459. The 186-residue stretch at 1345-1530 (KIEGADSNEL…KPTLDRIRER (186 aa)) folds into the PIK helical domain. A pleckstrin homology (PH) domain conferring phosphoinositide binding specificity region spans residues 1531 to 1648 (MVSSFSQSHR…EKWQAAIFKV (118 aa)). The PI3K/PI4K catalytic domain occupies 1617-1884 (FMATFKIKKD…LIRKSYESIF (268 aa)). The segment at 1623–1629 (IKKDVKD) is G-loop. A catalytic loop region spans residues 1751 to 1759 (QFKDRHNGN). The segment at 1770 to 1794 (HIDFGFIFDIVPGGIKFEAVPFKLT) is activation loop.

This sequence belongs to the PI3/PI4-kinase family. Type III PI4K subfamily.

It carries out the reaction a 1,2-diacyl-sn-glycero-3-phospho-(1D-myo-inositol) + ATP = a 1,2-diacyl-sn-glycero-3-phospho-(1D-myo-inositol 4-phosphate) + ADP + H(+). Its function is as follows. Acts on phosphatidylinositol (PI) in the first committed step in the production of the second messenger inositol 1,4,5,-trisphosphate. STT4 functions in PKC1 protein kinase pathway. The polypeptide is Phosphatidylinositol 4-kinase STT4 (STT4) (Saccharomyces cerevisiae (strain ATCC 204508 / S288c) (Baker's yeast)).